The following is a 402-amino-acid chain: Tryptophan synthase beta chain (402 aa).

Residue lysine 91 is modified to N6-(pyridoxal phosphate)lysine.

This sequence belongs to the TrpB family. In terms of assembly, tetramer of two alpha and two beta chains. Requires pyridoxal 5'-phosphate as cofactor.

The catalysed reaction is (1S,2R)-1-C-(indol-3-yl)glycerol 3-phosphate + L-serine = D-glyceraldehyde 3-phosphate + L-tryptophan + H2O. The protein operates within amino-acid biosynthesis; L-tryptophan biosynthesis; L-tryptophan from chorismate: step 5/5. Functionally, the beta subunit is responsible for the synthesis of L-tryptophan from indole and L-serine. The polypeptide is Tryptophan synthase beta chain (Streptococcus thermophilus (strain ATCC BAA-491 / LMD-9)).